Consider the following 322-residue polypeptide: Reticulocalbin-1 (322 aa).

The first 19 residues, 1-19 (MDVLGFICAVFLGTVVLHA), serve as a signal peptide directing secretion. Asn-44 carries N-linked (GlcNAc...) asparagine glycosylation. 6 EF-hand domains span residues 70-105 (ESKD…VQKR), 106-141 (YVYE…YYLS), 157-192 (KMLP…EEFE), 194-229 (MKDI…HEDR), 235-270 (WVKT…QDYD), and 271-306 (HAQA…FVGS). 29 residues coordinate Ca(2+): Asp-83, Asp-85, Asn-87, Tyr-89, Glu-94, Asp-119, Asn-121, Asp-123, Lys-125, Glu-130, Asp-170, Asp-172, Asp-174, Glu-181, Asp-207, Asn-209, Asp-211, His-213, Glu-218, Asp-248, Asn-250, Asp-252, Lys-254, Glu-259, Asp-284, Asp-286, Asp-288, Met-290, and Glu-295. The Prevents secretion from ER motif lies at 319–322 (HDEL).

Belongs to the CREC family.

Its subcellular location is the endoplasmic reticulum lumen. May regulate calcium-dependent activities in the endoplasmic reticulum lumen or post-ER compartment. In Takifugu rubripes (Japanese pufferfish), this protein is Reticulocalbin-1 (rcn1).